A 279-amino-acid polypeptide reads, in one-letter code: Protoheme IX farnesyltransferase (279 aa).

9 helical membrane passes run 1–21, 29–49, 79–99, 101–121, 128–148, 156–176, 200–220, 225–245, and 254–274; these read MIKP…FFLA, IFFL…CILN, ILFF…YIYI, FLCT…YSYL, FSTF…YVAV, CTIL…SIII, IIFI…LYFF, FFYF…SFLS, and IWSR…SFLM.

Belongs to the UbiA prenyltransferase family. Protoheme IX farnesyltransferase subfamily.

Its subcellular location is the cell membrane. The catalysed reaction is heme b + (2E,6E)-farnesyl diphosphate + H2O = Fe(II)-heme o + diphosphate. It functions in the pathway porphyrin-containing compound metabolism; heme O biosynthesis; heme O from protoheme: step 1/1. Converts heme B (protoheme IX) to heme O by substitution of the vinyl group on carbon 2 of heme B porphyrin ring with a hydroxyethyl farnesyl side group. The polypeptide is Protoheme IX farnesyltransferase (Buchnera aphidicola subsp. Cinara cedri (strain Cc)).